Here is a 1014-residue protein sequence, read N- to C-terminus: Resistance to glucose repression protein 1 (1014 aa).

The interval 1–63 (MSTNLANYFA…AVQAKNDDDF (63 aa)) is disordered. The residue at position 2 (Ser-2) is an N-acetylserine. Residues 11–34 (GKKDIENEHVNRNASHESNSKSDV) are compositionally biased toward basic and acidic residues. Thr-73 bears the Phosphothreonine mark. Ser-75 carries the phosphoserine modification. 2 disordered regions span residues 90-144 (LGRS…YLIP) and 236-270 (SEGNAQSEEEHDLERGYGSDDENSKRISMPTKNSK). Over residues 104-115 (YDNSSNNSSSNS) the composition is skewed to low complexity. 2 positions are modified to phosphoserine: Ser-242 and Ser-254. Positions 247–260 (DLERGYGSDDENSK) are enriched in basic and acidic residues. Positions 277 to 283 (KPILKKR) match the Nuclear localization signal motif. Ser-311 carries the phosphoserine modification. Residues 340–463 (YPKESNSSVS…SEKSNKPTKN (124 aa)) form a disordered region. Polar residues-rich tracts occupy residues 343–352 (ESNSSVSLKS), 361–370 (STIPNPVGEN), 389–407 (HVQNNRSTAQSNKSILENS), and 415–455 (LDQN…NPSE). Ser-421 carries the phosphoserine modification. Tyr-480 bears the Phosphotyrosine mark. Ser-490 is subject to Phosphoserine. 2 disordered regions span residues 531 to 557 (EHLNKNTSDDDTSSQSSSSSHSDDEEH) and 570 to 591 (SDSGVHSPITDNSSVASSTTSR). Phosphoserine is present on residues Ser-570, Ser-572, and Ser-576. Residues 578 to 591 (ITDNSSVASSTTSR) are compositionally biased toward polar residues. The Nuclear localization signal signature appears at 595-599 (RPIIK). Residues Ser-610, Ser-614, and Ser-680 each carry the phosphoserine modification. A disordered region spans residues 690 to 897 (SKEKHVPQLH…QSFRIVNNTP (208 aa)). Over residues 722–740 (YSSSSDSEQQFIEDSQYNS) the composition is skewed to low complexity. A compositionally biased stretch (acidic residues) spans 741-758 (SDDEEEEDDDDQEVDDNH). 2 stretches are compositionally biased toward polar residues: residues 770–802 (LGKSGSTNSLYDLAQPSLSSATPQQKNPTNFTG) and 822–833 (RNSSSGNFIFNS). The short motif at 873-879 (KKKALPK) is the Nuclear localization signal element. Polar residues predominate over residues 884–897 (SDSSQSFRIVNNTP). At Thr-896 the chain carries Phosphothreonine. Ser-898 carries the phosphoserine modification. The span at 959–972 (KKVDSVQTTRKEAS) shows a compositional bias: basic and acidic residues. The disordered stretch occupies residues 959-982 (KKVDSVQTTRKEASLTDSSNESLH). The residue at position 980 (Ser-980) is a Phosphoserine.

Interacts with SAK1.

The protein localises to the nucleus. Functionally, involved in RNA processing and negative regulation of glucose repression. Regulates the level of two antigens, P43 and P70. Binds to protein phosphatase type 1. Functions with REG2 and SNF1 protein kinase to regulate growth. Might regulate SNF1 directly or indirectly. The chain is Resistance to glucose repression protein 1 (REG1) from Saccharomyces cerevisiae (strain ATCC 204508 / S288c) (Baker's yeast).